The following is a 344-amino-acid chain: GTPase Obg (344 aa).

Residues 1-159 (MKFLDQAKVY…RWIWLRLKLI (159 aa)) enclose the Obg domain. The OBG-type G domain maps to 160–327 (ADAGLVGLPN…ALRLLLSVVE (168 aa)). GTP is bound by residues 166-173 (GLPNAGKS), 191-195 (FTTLH), 212-215 (DIPG), 279-282 (SKVD), and 308-310 (SAQ). Residues serine 173 and threonine 193 each contribute to the Mg(2+) site.

This sequence belongs to the TRAFAC class OBG-HflX-like GTPase superfamily. OBG GTPase family. As to quaternary structure, monomer. Requires Mg(2+) as cofactor.

It is found in the cytoplasm. Functionally, an essential GTPase which binds GTP, GDP and possibly (p)ppGpp with moderate affinity, with high nucleotide exchange rates and a fairly low GTP hydrolysis rate. Plays a role in control of the cell cycle, stress response, ribosome biogenesis and in those bacteria that undergo differentiation, in morphogenesis control. The polypeptide is GTPase Obg (Xanthobacter autotrophicus (strain ATCC BAA-1158 / Py2)).